A 66-amino-acid chain; its full sequence is Large ribosomal subunit protein bL33 (66 aa).

It belongs to the bacterial ribosomal protein bL33 family.

The protein is Large ribosomal subunit protein bL33 of Prochlorococcus marinus (strain MIT 9303).